We begin with the raw amino-acid sequence, 138 residues long: Putative pre-16S rRNA nuclease (138 aa).

Belongs to the YqgF nuclease family.

It is found in the cytoplasm. In terms of biological role, could be a nuclease involved in processing of the 5'-end of pre-16S rRNA. In Geobacillus kaustophilus (strain HTA426), this protein is Putative pre-16S rRNA nuclease.